The following is a 117-amino-acid chain: Cuticle protein CP1243 (117 aa).

4 consecutive repeat copies span residues 1–17, 26–43, 67–84, and 93–110.

In terms of tissue distribution, calcified shell.

The chain is Cuticle protein CP1243 from Cancer pagurus (Rock crab).